Here is a 305-residue protein sequence, read N- to C-terminus: Taste receptor type 2 member 136 (305 aa).

Topologically, residues 1–9 are extracellular; it reads MMSFLVSIA. The helical transmembrane segment at 10–30 threads the bilayer; sequence SIAMLVKIVLGTFANVFIVLV. Residues 31-46 lie on the Cytoplasmic side of the membrane; that stretch reads NFTDCIKKRKFLLADR. A helical transmembrane segment spans residues 47-67; the sequence is ILTVLAIFRFDLLWIILMNWS. Residues 68–69 are Extracellular-facing; that stretch reads SS. The chain crosses the membrane as a helical span at residues 70-90; the sequence is VFHVGLYFQVRFCICVVWIVT. Residues 91–99 lie on the Cytoplasmic side of the membrane; sequence NHFNTWLAN. A helical transmembrane segment spans residues 100–120; sequence ILSILYLLKIDNFSNLIFLGL. Residues 121–127 are Extracellular-facing; that stretch reads KGKIKCP. Residues 128-148 traverse the membrane as a helical segment; it reads YIVLLPCFVLLFPNLIMVTIC. The Cytoplasmic portion of the chain corresponds to 149 to 176; sequence ETTQANGHQGNLTGKTKLTYFTNLIAMT. Residues 177 to 197 traverse the membrane as a helical segment; that stretch reads FTLGSLVPFTTFMICFLLLIC. Topologically, residues 198–223 are extracellular; sequence SLCKHLRTMRLYGKGSQGPSASTHIK. A helical membrane pass occupies residues 224-244; that stretch reads VLQVLISFLLLFSMFILLLII. Residues 245-305 are Cytoplasmic-facing; it reads SDYNYTKSLE…ARFWLKEKKP (61 aa).

Belongs to the G-protein coupled receptor T2R family.

The protein localises to the membrane. Its function is as follows. Putative taste receptor which may play a role in the perception of bitterness. This is Taste receptor type 2 member 136 (Tas2r136) from Mus musculus (Mouse).